A 312-amino-acid chain; its full sequence is MDSDMSGGMVKVMVPASTANLGPGFDVLGVALNLYTEISMEFIKDGLEIFVEGEGVEDIENDQNNLIYKSAEVIFKKIGVFNKGLRIKIKNEIPLGRGLGSSAAAIVGGLLAANELTGRVLKREEILNLAALIEGHADNVTAALNGGLNVSIFDKNKVYYARKALEDDIDFLAFVPQEMVRTEIARKVLPEKVDFNDAVFNTGRTAFLVSVLIEKKYELLKIATQDMLHQKYRAKLVPFMEECFEKALLAGAYAAFLSGAGPTIMAISSPENSERVLKEVGKVYEERGLSYRAYRLKCENNGAQVLKTPSFV.

94–104 provides a ligand contact to ATP; that stretch reads PLGRGLGSSAA.

This sequence belongs to the GHMP kinase family. Homoserine kinase subfamily.

It is found in the cytoplasm. The catalysed reaction is L-homoserine + ATP = O-phospho-L-homoserine + ADP + H(+). It functions in the pathway amino-acid biosynthesis; L-threonine biosynthesis; L-threonine from L-aspartate: step 4/5. Its function is as follows. Catalyzes the ATP-dependent phosphorylation of L-homoserine to L-homoserine phosphate. In Caldanaerobacter subterraneus subsp. tengcongensis (strain DSM 15242 / JCM 11007 / NBRC 100824 / MB4) (Thermoanaerobacter tengcongensis), this protein is Homoserine kinase.